We begin with the raw amino-acid sequence, 418 residues long: Tyrosine--tRNA ligase 1 (418 aa).

Tyrosine 34 lines the L-tyrosine pocket. Positions proline 39 to histidine 48 match the 'HIGH' region motif. L-tyrosine-binding residues include tyrosine 169 and glutamine 173. The short motif at lysine 230–threonine 234 is the 'KMSKS' region element. Residue lysine 233 participates in ATP binding. The 67-residue stretch at threonine 352 to tyrosine 418 folds into the S4 RNA-binding domain.

It belongs to the class-I aminoacyl-tRNA synthetase family. TyrS type 1 subfamily. Homodimer.

The protein localises to the cytoplasm. It carries out the reaction tRNA(Tyr) + L-tyrosine + ATP = L-tyrosyl-tRNA(Tyr) + AMP + diphosphate + H(+). Functionally, catalyzes the attachment of tyrosine to tRNA(Tyr) in a two-step reaction: tyrosine is first activated by ATP to form Tyr-AMP and then transferred to the acceptor end of tRNA(Tyr). This is Tyrosine--tRNA ligase 1 from Bacillus cereus (strain ATCC 14579 / DSM 31 / CCUG 7414 / JCM 2152 / NBRC 15305 / NCIMB 9373 / NCTC 2599 / NRRL B-3711).